The chain runs to 97 residues: Large ribosomal subunit protein uL23 (97 aa).

The protein belongs to the universal ribosomal protein uL23 family. Part of the 50S ribosomal subunit. Contacts protein L29, and trigger factor when it is bound to the ribosome.

Its function is as follows. One of the early assembly proteins it binds 23S rRNA. One of the proteins that surrounds the polypeptide exit tunnel on the outside of the ribosome. Forms the main docking site for trigger factor binding to the ribosome. The polypeptide is Large ribosomal subunit protein uL23 (Marinobacter nauticus (strain ATCC 700491 / DSM 11845 / VT8) (Marinobacter aquaeolei)).